A 137-amino-acid polypeptide reads, in one-letter code: Peptide methionine sulfoxide reductase MsrB (137 aa).

Residues 7-129 (PEELKNGLSE…NSASLSFTDE (123 aa)) form the MsrB domain. Residues Cys-46, Cys-49, Cys-95, and Cys-98 each coordinate Zn(2+). Cys-118 serves as the catalytic Nucleophile.

It belongs to the MsrB Met sulfoxide reductase family. The cofactor is Zn(2+).

It catalyses the reaction L-methionyl-[protein] + [thioredoxin]-disulfide + H2O = L-methionyl-(R)-S-oxide-[protein] + [thioredoxin]-dithiol. The polypeptide is Peptide methionine sulfoxide reductase MsrB (Klebsiella pneumoniae subsp. pneumoniae (strain ATCC 700721 / MGH 78578)).